A 210-amino-acid chain; its full sequence is Ribosomal RNA large subunit methyltransferase E (210 aa).

Residues Gly55, Trp57, Asp75, Asp93, and Asp117 each coordinate S-adenosyl-L-methionine. The active-site Proton acceptor is the Lys157. Residues 175-210 (YRQVKTTKPPSSRKKSSEMYVVGLDFKPKKNKKSKD) form a disordered region.

The protein belongs to the class I-like SAM-binding methyltransferase superfamily. RNA methyltransferase RlmE family.

The protein localises to the cytoplasm. The catalysed reaction is uridine(2552) in 23S rRNA + S-adenosyl-L-methionine = 2'-O-methyluridine(2552) in 23S rRNA + S-adenosyl-L-homocysteine + H(+). Specifically methylates the uridine in position 2552 of 23S rRNA at the 2'-O position of the ribose in the fully assembled 50S ribosomal subunit. The polypeptide is Ribosomal RNA large subunit methyltransferase E (Methanobrevibacter smithii (strain ATCC 35061 / DSM 861 / OCM 144 / PS)).